A 95-amino-acid polypeptide reads, in one-letter code: Putative regulatory protein STH1338 (95 aa).

This sequence belongs to the RemA family.

The protein is Putative regulatory protein STH1338 of Symbiobacterium thermophilum (strain DSM 24528 / JCM 14929 / IAM 14863 / T).